The sequence spans 256 residues: Phosphoribosylaminoimidazole-succinocarboxamide synthase (256 aa).

Belongs to the SAICAR synthetase family.

It catalyses the reaction 5-amino-1-(5-phospho-D-ribosyl)imidazole-4-carboxylate + L-aspartate + ATP = (2S)-2-[5-amino-1-(5-phospho-beta-D-ribosyl)imidazole-4-carboxamido]succinate + ADP + phosphate + 2 H(+). The protein operates within purine metabolism; IMP biosynthesis via de novo pathway; 5-amino-1-(5-phospho-D-ribosyl)imidazole-4-carboxamide from 5-amino-1-(5-phospho-D-ribosyl)imidazole-4-carboxylate: step 1/2. This Synechococcus sp. (strain JA-3-3Ab) (Cyanobacteria bacterium Yellowstone A-Prime) protein is Phosphoribosylaminoimidazole-succinocarboxamide synthase.